The primary structure comprises 160 residues: Nucleotide-binding protein Patl_4311 (160 aa).

This sequence belongs to the YajQ family.

In terms of biological role, nucleotide-binding protein. In Pseudoalteromonas atlantica (strain T6c / ATCC BAA-1087), this protein is Nucleotide-binding protein Patl_4311.